We begin with the raw amino-acid sequence, 78 residues long: NAD(P)H-quinone oxidoreductase subunit O (78 aa).

This sequence belongs to the complex I NdhO subunit family. NDH-1 can be composed of about 15 different subunits; different subcomplexes with different compositions have been identified which probably have different functions.

Its subcellular location is the cellular thylakoid membrane. The catalysed reaction is a plastoquinone + NADH + (n+1) H(+)(in) = a plastoquinol + NAD(+) + n H(+)(out). It carries out the reaction a plastoquinone + NADPH + (n+1) H(+)(in) = a plastoquinol + NADP(+) + n H(+)(out). NDH-1 shuttles electrons from an unknown electron donor, via FMN and iron-sulfur (Fe-S) centers, to quinones in the respiratory and/or the photosynthetic chain. The immediate electron acceptor for the enzyme in this species is believed to be plastoquinone. Couples the redox reaction to proton translocation, and thus conserves the redox energy in a proton gradient. Cyanobacterial NDH-1 also plays a role in inorganic carbon-concentration. The polypeptide is NAD(P)H-quinone oxidoreductase subunit O (Prochlorococcus marinus (strain MIT 9301)).